A 488-amino-acid polypeptide reads, in one-letter code: L-arabinose isomerase 1 (488 aa).

Mn(2+) is bound by residues glutamate 306, glutamate 331, histidine 348, and histidine 447.

The protein belongs to the arabinose isomerase family. Mn(2+) is required as a cofactor.

It carries out the reaction beta-L-arabinopyranose = L-ribulose. The protein operates within carbohydrate degradation; L-arabinose degradation via L-ribulose; D-xylulose 5-phosphate from L-arabinose (bacterial route): step 1/3. In terms of biological role, catalyzes the conversion of L-arabinose to L-ribulose. This is L-arabinose isomerase 1 from Clostridium acetobutylicum (strain ATCC 824 / DSM 792 / JCM 1419 / IAM 19013 / LMG 5710 / NBRC 13948 / NRRL B-527 / VKM B-1787 / 2291 / W).